The sequence spans 307 residues: Regulating synaptic membrane exocytosis protein 3 (307 aa).

Residues 86–120 (STETGIAVEMRSRVTRQGSRESTDGSTNSNSSEGT) are disordered. Polar residues predominate over residues 109–119 (DGSTNSNSSEG). The 119-residue stretch at 155–273 (PMGDVHIAIM…DLSAVVTGWY (119 aa)) folds into the C2 domain. A phosphoserine mark is found at Ser294 and Ser297.

In terms of assembly, binds PPFIA3. Does not bind RAB3. In terms of tissue distribution, expressed exclusively in brain with significant levels in cortex, cerebellum and olfactory bulb. Detected at lower level in hippocampus.

It localises to the synapse. Functionally, regulates synaptic membrane exocytosis. In Rattus norvegicus (Rat), this protein is Regulating synaptic membrane exocytosis protein 3 (Rims3).